A 393-amino-acid chain; its full sequence is Flavohemoprotein (393 aa).

In terms of domain architecture, Globin spans 1–139 (MLSNAQRALI…LADLLIEAEE (139 aa)). Histidine 85 is a binding site for heme b. Residues tyrosine 95 and glutamate 138 each act as charge relay system in the active site. The segment at 150 to 393 (GGWRGVRRFR…FFGPAAALDA (244 aa)) is reductase. The region spanning 153 to 256 (RGVRRFRVAR…FPPAGDFVLR (104 aa)) is the FAD-binding FR-type domain. Residues tyrosine 191 and 205 to 208 (RNYS) contribute to the FAD site. 268 to 273 (GVGITP) contacts NADP(+). FAD is bound at residue 384–387 (FFGP).

Belongs to the globin family. Two-domain flavohemoproteins subfamily. This sequence in the C-terminal section; belongs to the flavoprotein pyridine nucleotide cytochrome reductase family. Requires heme b as cofactor. FAD is required as a cofactor.

It carries out the reaction 2 nitric oxide + NADPH + 2 O2 = 2 nitrate + NADP(+) + H(+). The enzyme catalyses 2 nitric oxide + NADH + 2 O2 = 2 nitrate + NAD(+) + H(+). Functionally, is involved in NO detoxification in an aerobic process, termed nitric oxide dioxygenase (NOD) reaction that utilizes O(2) and NAD(P)H to convert NO to nitrate, which protects the bacterium from various noxious nitrogen compounds. Therefore, plays a central role in the inducible response to nitrosative stress. The sequence is that of Flavohemoprotein from Pseudomonas aeruginosa (strain ATCC 15692 / DSM 22644 / CIP 104116 / JCM 14847 / LMG 12228 / 1C / PRS 101 / PAO1).